Here is a 510-residue protein sequence, read N- to C-terminus: Zinc metalloproteinase (510 aa).

The signal sequence occupies residues 1 to 24 (MKSKLICIIMVIAFQAHFTMTVKA). Residues 25–200 (DSVGEEKLQN…ILKKQNMLSE (176 aa)) constitute a propeptide that is removed on maturation. Histidine 349 is a Zn(2+) binding site. Residue glutamate 350 is part of the active site. Positions 353 and 373 each coordinate Zn(2+). Histidine 437 serves as the catalytic Proton donor.

It belongs to the peptidase M4 family. Zn(2+) serves as cofactor.

It localises to the secreted. Probably linked to the pathogenesis of listerial infection. In Listeria monocytogenes serovar 1/2a (strain ATCC BAA-679 / EGD-e), this protein is Zinc metalloproteinase (mpl).